The primary structure comprises 419 residues: Esterase FrsA (419 aa).

Belongs to the FrsA family.

It carries out the reaction a carboxylic ester + H2O = an alcohol + a carboxylate + H(+). Functionally, catalyzes the hydrolysis of esters. The protein is Esterase FrsA of Photobacterium profundum (strain SS9).